A 168-amino-acid polypeptide reads, in one-letter code: Transcription elongation factor GreB (168 aa).

The stretch at lysine 61–valine 84 forms a coiled coil.

This sequence belongs to the GreA/GreB family. GreB subfamily.

Functionally, necessary for efficient RNA polymerase transcription elongation past template-encoded arresting sites. The arresting sites in DNA have the property of trapping a certain fraction of elongating RNA polymerases that pass through, resulting in locked ternary complexes. Cleavage of the nascent transcript by cleavage factors such as GreA or GreB allows the resumption of elongation from the new 3'terminus. GreB releases sequences of up to 9 nucleotides in length. The protein is Transcription elongation factor GreB of Pseudomonas aeruginosa (strain ATCC 15692 / DSM 22644 / CIP 104116 / JCM 14847 / LMG 12228 / 1C / PRS 101 / PAO1).